The sequence spans 342 residues: UDP-N-acetylglucosamine transporter YEA4 (342 aa).

Residues 1–6 (MWNSLK) are Cytoplasmic-facing. Residues 7 to 27 (AFALVFGGCCSNVITFETLMS) traverse the membrane as a helical segment. At 28-35 (NETGSINN) the chain is on the lumenal side. A helical membrane pass occupies residues 36–56 (LITFCQFLFVTCQGLPEFLDV). At 57 to 61 (HQPFP) the chain is on the cytoplasmic side. Residues 62–82 (YFKPLKTPLHVYVITVVLFYI) traverse the membrane as a helical segment. The Lumenal segment spans residues 83–96 (SSTTNNNVFKYNIS). A helical membrane pass occupies residues 97 to 117 (IPIHIVFRCFGTVITMFTCWL). Over 118 to 123 (LNGRKY) the chain is Cytoplasmic. The chain crosses the membrane as a helical span at residues 124 to 144 (TKIQILSTLFLTIGAIIASLF). The Lumenal segment spans residues 145 to 168 (KDADFRYQDLKLQAWKIGSDQSVD). The helical transmembrane segment at 169-189 (LTFIFGICILVLSSFTSSLLS) threads the bilayer. Residues 190–253 (AYNERTYQKY…GGKILVPREE (64 aa)) lie on the Cytoplasmic side of the membrane. The chain crosses the membrane as a helical span at residues 254 to 274 (TLLLFNVLTQYFCVKGVNILA). Residues 275–307 (SKTNALTLSITLLVRKFISLLLSVRLFDNNLSY) are Lumenal-facing. The chain crosses the membrane as a helical span at residues 308-328 (TGYIGVYLVFFGAFIYSLGSI). At 329–342 (HPRQNDKGAIKKSK) the chain is on the cytoplasmic side.

This sequence belongs to the nucleotide-sugar transporter family. SLC35B subfamily.

The protein localises to the endoplasmic reticulum. It is found in the endoplasmic reticulum membrane. Sugar transporter that specifically mediates the transport of UDP-N-acetylglucosamine (UDP-GlcNAc) and is required for cell wall chitin synthesis. The sequence is that of UDP-N-acetylglucosamine transporter YEA4 (YEA4) from Saccharomyces cerevisiae (strain ATCC 204508 / S288c) (Baker's yeast).